The chain runs to 161 residues: 6,7-dimethyl-8-ribityllumazine synthase (161 aa).

5-amino-6-(D-ribitylamino)uracil is bound by residues Trp31, 63 to 65, and 85 to 87; these read SFE and VVI. 90–91 contributes to the (2S)-2-hydroxy-3-oxobutyl phosphate binding site; sequence GT. His93 acts as the Proton donor in catalysis. 5-amino-6-(D-ribitylamino)uracil is bound at residue Phe118. Arg132 lines the (2S)-2-hydroxy-3-oxobutyl phosphate pocket.

This sequence belongs to the DMRL synthase family.

The enzyme catalyses (2S)-2-hydroxy-3-oxobutyl phosphate + 5-amino-6-(D-ribitylamino)uracil = 6,7-dimethyl-8-(1-D-ribityl)lumazine + phosphate + 2 H2O + H(+). The protein operates within cofactor biosynthesis; riboflavin biosynthesis; riboflavin from 2-hydroxy-3-oxobutyl phosphate and 5-amino-6-(D-ribitylamino)uracil: step 1/2. In terms of biological role, catalyzes the formation of 6,7-dimethyl-8-ribityllumazine by condensation of 5-amino-6-(D-ribitylamino)uracil with 3,4-dihydroxy-2-butanone 4-phosphate. This is the penultimate step in the biosynthesis of riboflavin. The protein is 6,7-dimethyl-8-ribityllumazine synthase of Paenarthrobacter aurescens (strain TC1).